Consider the following 138-residue polypeptide: Gonadotropin subunit beta-2 (138 aa).

A signal peptide spans 1–21 (MPASSYFLLFFFMNFFSPAQS). 6 disulfides stabilise this stretch: Cys-27-Cys-75, Cys-41-Cys-90, Cys-44-Cys-128, Cys-52-Cys-106, Cys-56-Cys-108, and Cys-111-Cys-118. Asn-31 carries an N-linked (GlcNAc...) asparagine glycan.

Belongs to the glycoprotein hormones subunit beta family. Heterodimer of an alpha and a beta chain.

It is found in the secreted. In terms of biological role, involved in gametogenesis and steroidogenesis. This chain is Gonadotropin subunit beta-2 (cgbb), found in Clarias gariepinus (North African catfish).